Consider the following 524-residue polypeptide: Cytochrome P450 CYP749A22 (524 aa).

A helical transmembrane segment spans residues 12 to 32; sequence TPILFQFLLSSLCVFLLFVFI. Cys-472 contacts heme.

The protein belongs to the cytochrome P450 family. Heme is required as a cofactor.

It localises to the membrane. In terms of biological role, probable heme-thiolate monooxygenase. This chain is Cytochrome P450 CYP749A22, found in Panax ginseng (Korean ginseng).